The chain runs to 36 residues: Allergen Act d 3 (36 aa).

N-glycosylated.

The polypeptide is Allergen Act d 3 (Actinidia deliciosa (Kiwi)).